The following is a 210-amino-acid chain: ATP-dependent Clp protease proteolytic subunit (210 aa).

The active-site Nucleophile is the S107. H132 is a catalytic residue.

This sequence belongs to the peptidase S14 family. Fourteen ClpP subunits assemble into 2 heptameric rings which stack back to back to give a disk-like structure with a central cavity, resembling the structure of eukaryotic proteasomes.

Its subcellular location is the cytoplasm. The enzyme catalyses Hydrolysis of proteins to small peptides in the presence of ATP and magnesium. alpha-casein is the usual test substrate. In the absence of ATP, only oligopeptides shorter than five residues are hydrolyzed (such as succinyl-Leu-Tyr-|-NHMec, and Leu-Tyr-Leu-|-Tyr-Trp, in which cleavage of the -Tyr-|-Leu- and -Tyr-|-Trp bonds also occurs).. Functionally, cleaves peptides in various proteins in a process that requires ATP hydrolysis. Has a chymotrypsin-like activity. Plays a major role in the degradation of misfolded proteins. This chain is ATP-dependent Clp protease proteolytic subunit, found in Ruegeria sp. (strain TM1040) (Silicibacter sp.).